A 159-amino-acid chain; its full sequence is Protein Smg homolog (159 aa).

It belongs to the Smg family.

This is Protein Smg homolog from Nitrosococcus oceani (strain ATCC 19707 / BCRC 17464 / JCM 30415 / NCIMB 11848 / C-107).